A 387-amino-acid polypeptide reads, in one-letter code: 3-ketoacyl-CoA thiolase (387 aa).

Cys-91 acts as the Acyl-thioester intermediate in catalysis. Residues His-343 and Cys-373 each act as proton acceptor in the active site.

Belongs to the thiolase-like superfamily. Thiolase family. As to quaternary structure, heterotetramer of two alpha chains (FadB) and two beta chains (FadA).

It is found in the cytoplasm. It catalyses the reaction an acyl-CoA + acetyl-CoA = a 3-oxoacyl-CoA + CoA. The protein operates within lipid metabolism; fatty acid beta-oxidation. Its function is as follows. Catalyzes the final step of fatty acid oxidation in which acetyl-CoA is released and the CoA ester of a fatty acid two carbons shorter is formed. The protein is 3-ketoacyl-CoA thiolase of Shigella flexneri serotype 5b (strain 8401).